Here is a 481-residue protein sequence, read N- to C-terminus: Protein nucleotidyltransferase YdiU (481 aa).

The ATP site is built by glycine 85, glycine 87, arginine 88, lysine 108, aspartate 120, glycine 121, arginine 172, and arginine 179. Aspartate 248 functions as the Proton acceptor in the catalytic mechanism. Residues asparagine 249 and aspartate 258 each contribute to the Mg(2+) site. Aspartate 258 contacts ATP.

This sequence belongs to the SELO family. It depends on Mg(2+) as a cofactor. The cofactor is Mn(2+).

It catalyses the reaction L-seryl-[protein] + ATP = 3-O-(5'-adenylyl)-L-seryl-[protein] + diphosphate. It carries out the reaction L-threonyl-[protein] + ATP = 3-O-(5'-adenylyl)-L-threonyl-[protein] + diphosphate. The catalysed reaction is L-tyrosyl-[protein] + ATP = O-(5'-adenylyl)-L-tyrosyl-[protein] + diphosphate. The enzyme catalyses L-histidyl-[protein] + UTP = N(tele)-(5'-uridylyl)-L-histidyl-[protein] + diphosphate. It catalyses the reaction L-seryl-[protein] + UTP = O-(5'-uridylyl)-L-seryl-[protein] + diphosphate. It carries out the reaction L-tyrosyl-[protein] + UTP = O-(5'-uridylyl)-L-tyrosyl-[protein] + diphosphate. Nucleotidyltransferase involved in the post-translational modification of proteins. It can catalyze the addition of adenosine monophosphate (AMP) or uridine monophosphate (UMP) to a protein, resulting in modifications known as AMPylation and UMPylation. The chain is Protein nucleotidyltransferase YdiU from Cereibacter sphaeroides (strain ATCC 17025 / ATH 2.4.3) (Rhodobacter sphaeroides).